Reading from the N-terminus, the 307-residue chain is DDRGK domain-containing protein 1 (307 aa).

Residues 1–2 (MD) lie on the Lumenal side of the membrane. The chain crosses the membrane as a helical span at residues 3–23 (LILLVGIAVALLVILATLYFL). Topologically, residues 24–307 (QNKNKAAGEA…PVQSAAGGDS (284 aa)) are cytoplasmic. Composition is skewed to low complexity over residues 32-43 (EAKPAAAAPRRG) and 54-83 (RRAQIARNQRNRLQQNAPAPAPEAVAPAAA). The tract at residues 32-162 (EAKPAAAAPR…EEVEAEAERK (131 aa)) is disordered. Over residues 117 to 162 (KMEAKEQKRLQREHELQEREKRKVKEAKEDAERKQQEEVEAEAERK) the composition is skewed to basic and acidic residues.

It belongs to the DDRGK1 family. As to quaternary structure, interacts with Atg9; the interaction is transient.

It localises to the endoplasmic reticulum membrane. In terms of biological role, substrate adapter for ufmylation, the covalent attachment of the ubiquitin-like modifier UFM1 to substrate proteins. Required for ufmylation of Atg9; protects the nervous system during aging, possibly by stabilizing Atg9 and supporting its function. The sequence is that of DDRGK domain-containing protein 1 from Drosophila willistoni (Fruit fly).